The following is a 485-amino-acid chain: Aspartyl/glutamyl-tRNA(Asn/Gln) amidotransferase subunit B (485 aa).

The protein belongs to the GatB/GatE family. GatB subfamily. Heterotrimer of A, B and C subunits.

The enzyme catalyses L-glutamyl-tRNA(Gln) + L-glutamine + ATP + H2O = L-glutaminyl-tRNA(Gln) + L-glutamate + ADP + phosphate + H(+). It carries out the reaction L-aspartyl-tRNA(Asn) + L-glutamine + ATP + H2O = L-asparaginyl-tRNA(Asn) + L-glutamate + ADP + phosphate + 2 H(+). Its function is as follows. Allows the formation of correctly charged Asn-tRNA(Asn) or Gln-tRNA(Gln) through the transamidation of misacylated Asp-tRNA(Asn) or Glu-tRNA(Gln) in organisms which lack either or both of asparaginyl-tRNA or glutaminyl-tRNA synthetases. The reaction takes place in the presence of glutamine and ATP through an activated phospho-Asp-tRNA(Asn) or phospho-Glu-tRNA(Gln). This is Aspartyl/glutamyl-tRNA(Asn/Gln) amidotransferase subunit B from Borrelia recurrentis (strain A1).